The sequence spans 181 residues: Swi1-interacting protein swi3 (181 aa).

The tract at residues 1–47 (MSTAASDSGVEKLVEENKREEVKKNEEEKEFDLGLEENPDSVKKPRK) is disordered. Positions 9 to 27 (GVEKLVEENKREEVKKNEE) are enriched in basic and acidic residues. Positions 28-39 (EKEFDLGLEENP) are enriched in acidic residues.

The protein belongs to the CSM3 family. Fork protection complex (FPC) consisting of swi1 and swi3 interacts with mat1 cis-acting sequences and mat1-proximal polar-terminator of replication (RTS1).

The protein localises to the nucleus. Functionally, forms a fork protection complex (FPC) with swi1. FPC coordinates leading and lagging strand synthesis and moves with the replication fork. It is required for programmed fork-pausing which is necessary for mating-type switching. FPC stabilizes replication forks in a configuration that is recognized by replication checkpoint sensors. It is involved in termination at the mat1-proximal polar-terminator of replication (RTS1) and also required for activation of the Rad53-like checkpoint kinase cds1. The polypeptide is Swi1-interacting protein swi3 (swi3) (Schizosaccharomyces pombe (strain 972 / ATCC 24843) (Fission yeast)).